We begin with the raw amino-acid sequence, 393 residues long: Cytotoxic and regulatory T-cell molecule (393 aa).

The signal sequence occupies residues 1–16 (MWWGALSLLFWVPVQA). An Ig-like V-type domain is found at 17–111 (AFLKMETVTV…SVKTKQVRVT (95 aa)). Topologically, residues 17-289 (AFLKMETVTV…HTGLARRKSG (273 aa)) are extracellular. 2 disulfide bridges follow: Cys-36-Cys-96 and Cys-139-Cys-194. 2 N-linked (GlcNAc...) asparagine glycosylation sites follow: Asn-85 and Asn-176. An Ig-like C2-type domain is found at 119–208 (PTVEALVLRR…EGLHGRKLVA (90 aa)). The segment covering 218-228 (DQETSDQETSD) has biased composition (acidic residues). The tract at residues 218-280 (DQETSDQETS…GLSTEASAQH (63 aa)) is disordered. The segment covering 229–246 (APEQSSLSSQALQQPTST) has biased composition (low complexity). Polar residues predominate over residues 247-256 (VSMMENSSIP). Over residues 257-267 (ETDKEEKEHAT) the composition is skewed to basic and acidic residues. Over residues 270–280 (PGLSTEASAQH) the composition is skewed to polar residues. The helical transmembrane segment at 290-310 (ILLLTLVSFLIFILFIIVQLF) threads the bilayer. The Cytoplasmic segment spans residues 311 to 393 (IMKLRKAHVV…KHSRVPESIV (83 aa)). The disordered stretch occupies residues 333–356 (ESYRSRSNNEETSSQENSSQAPQS). Positions 342–352 (EETSSQENSSQ) are enriched in low complexity. Residues 390–393 (ESIV) carry the PDZ-binding motif.

Belongs to the nectin family. Monomer. May form homodimer (via Ig-like V-type domain). Interacts (via Ig-like V-type domain) with CADM1 (via Ig-like V-type domain); the interaction competes with CRTAM homodimerization and CADM1 homodimerization. Interacts (via PDZ-binding motif) with SCRIB (via PDZ domain 3); the interaction promotes CRTAM and SCRIB polarization in a subset of CD4+ T-cells. In terms of tissue distribution, in the immune system, expression is restricted to activated class-I MHC-restricted cells, including NKT, NK and CD8+ T-cells (at protein level). Transiently expressed in activated CD8+ T-cells and a subset of activated CD4+ T-cells (at protein level). Expressed in activated intestinal T-cells, specifically intraepithelial CD4+ CD8+ T-cells, intraepithelial CD4+ T-cells and, CD8+ T-cells in the intestine epithelium, lamina propria, Peyer's Patches and mesenteric lymph nodes. Also expressed in spleen, brain and testis.

The protein resides in the cell membrane. Mediates heterophilic cell-cell adhesion which regulates the activation, differentiation and tissue retention of various T-cell subsets. Interaction with CADM1 promotes natural killer (NK) cell cytotoxicity and IFNG/interferon-gamma secretion by CD8+ T-cells in vitro as well as NK cell-mediated rejection of tumors expressing CADM1 in vivo. Regulates CD8+ T-cell proliferation in response to T-cell receptor (TCR) activation. Appears to be dispensable for CD8+ T-cell-mediated cytotoxicity. Interaction with SCRIB promotes the late phase of cellular polarization of a subset of CD4+ T-cells, which in turn regulates TCR-mediated proliferation and IFNG, IL17 and IL22 production. By interacting with CADM1 on CD8+ dendritic cells, regulates the retention of activated CD8+ T-cells within the draining lymph node. Required for the intestinal retention of intraepithelial CD4+ CD8+ T-cells and, to a lesser extent, intraepithelial and lamina propria CD8+ T-cells and CD4+ T-cells. Interaction with CADM1 promotes the adhesion to gut-associated CD103+ dendritic cells, which may facilitate the expression of gut-homing and adhesion molecules on T-cells and the conversion of CD4+ T-cells into CD4+ CD8+ T-cells. The chain is Cytotoxic and regulatory T-cell molecule from Mus musculus (Mouse).